A 157-amino-acid polypeptide reads, in one-letter code: Crossover junction endodeoxyribonuclease RuvC (157 aa).

Active-site residues include D7, E67, and D140. D7, E67, and D140 together coordinate Mg(2+).

It belongs to the RuvC family. In terms of assembly, homodimer which binds Holliday junction (HJ) DNA. The HJ becomes 2-fold symmetrical on binding to RuvC with unstacked arms; it has a different conformation from HJ DNA in complex with RuvA. In the full resolvosome a probable DNA-RuvA(4)-RuvB(12)-RuvC(2) complex forms which resolves the HJ. Mg(2+) serves as cofactor.

Its subcellular location is the cytoplasm. The catalysed reaction is Endonucleolytic cleavage at a junction such as a reciprocal single-stranded crossover between two homologous DNA duplexes (Holliday junction).. Functionally, the RuvA-RuvB-RuvC complex processes Holliday junction (HJ) DNA during genetic recombination and DNA repair. Endonuclease that resolves HJ intermediates. Cleaves cruciform DNA by making single-stranded nicks across the HJ at symmetrical positions within the homologous arms, yielding a 5'-phosphate and a 3'-hydroxyl group; requires a central core of homology in the junction. The consensus cleavage sequence is 5'-(A/T)TT(C/G)-3'. Cleavage occurs on the 3'-side of the TT dinucleotide at the point of strand exchange. HJ branch migration catalyzed by RuvA-RuvB allows RuvC to scan DNA until it finds its consensus sequence, where it cleaves and resolves the cruciform DNA. The polypeptide is Crossover junction endodeoxyribonuclease RuvC (Rickettsia conorii (strain ATCC VR-613 / Malish 7)).